Reading from the N-terminus, the 383-residue chain is Protein ctg-1 (383 aa).

A CRAL-TRIO domain is found at 73 to 247 (PPECLEKYCG…YWGGNLVENG (175 aa)). The region spanning 271–380 (KKAMADYDQL…AKQLRYNIEI (110 aa)) is the GOLD domain.

As to expression, highly expressed in cells of the pi uterine cell lineage.

It localises to the cytoplasm. The protein resides in the cytosol. In terms of biological role, vesicle trafficking protein. Functions in uterine cells to promote basement membrane (BM) mobility and BM gap formation during tissue remodeling. The polypeptide is Protein ctg-1 (Caenorhabditis elegans).